The following is a 466-amino-acid chain: Alpha-1A adrenergic receptor (466 aa).

Residues 1–25 (MVFLSGNASDSSNCTHPPAPVNISK) lie on the Extracellular side of the membrane. N-linked (GlcNAc...) asparagine glycosylation is found at N7, N13, and N22. Residues 26–51 (AILLGVILGGLILFGVLGNILVILSV) traverse the membrane as a helical segment. At 52 to 63 (ACHRHLHSVTHY) the chain is on the cytoplasmic side. The chain crosses the membrane as a helical span at residues 64 to 89 (YIVNLAVADLLLTSTVLPFSAIFEIL). The Extracellular segment spans residues 90-99 (GYWAFGRVFC). The helical transmembrane segment at 100-122 (NIWAAVDVLCCTASIISLCVISI) threads the bilayer. The Cytoplasmic portion of the chain corresponds to 123–143 (DRYIGVSYPLRYPTIVTQRRG). A helical membrane pass occupies residues 144–168 (LRALLCVWAFSLVISVGPLFGWRQP). Residues 169–181 (APDDETICQINEE) lie on the Extracellular side of the membrane. Residues 182-205 (PGYVLFSALGSFYVPLTIILAMYC) form a helical membrane-spanning segment. The Cytoplasmic portion of the chain corresponds to 206–272 (RVYVVAKRES…KFSREKKAAK (67 aa)). The helical transmembrane segment at 273–297 (TLGIVVGCFVLCWLPFFLVMPIGSF) threads the bilayer. Topologically, residues 298 to 304 (FPDFKPP) are extracellular. The helical transmembrane segment at 305–329 (ETVFKIVFWLGYLNSCINPIIYPCS) threads the bilayer. Residues 330–466 (SQEFKKAFQN…ISLSENGEEV (137 aa)) are Cytoplasmic-facing. Residues 334–349 (KKAFQNVLKIQCLRRK) carry the Nuclear localization signal motif. A lipid anchor (S-palmitoyl cysteine) is attached at C345.

The protein belongs to the G-protein coupled receptor 1 family. Adrenergic receptor subfamily. ADRA1A sub-subfamily. In terms of assembly, homo- and heterooligomer. Heterooligomerizes with ADRA1B homooligomers in cardiac myocytes. Interacts with CAVIN4. Abundant in liver, vas deferens, brain, and aorta, but not in heart.

It is found in the nucleus membrane. The protein localises to the cell membrane. The protein resides in the cytoplasm. Its subcellular location is the membrane. It localises to the caveola. This alpha-adrenergic receptor mediates its action by association with G proteins that activate a phosphatidylinositol-calcium second messenger system. Its effect is mediated by G(q) and G(11) proteins. Nuclear ADRA1A-ADRA1B heterooligomers regulate phenylephrine (PE)-stimulated ERK signaling in cardiac myocytes. The polypeptide is Alpha-1A adrenergic receptor (ADRA1A) (Oryctolagus cuniculus (Rabbit)).